The sequence spans 770 residues: Lysine-specific histone demethylase 1 (770 aa).

The interval 1 to 21 (MSSDTGSEYLDEEIRGDELGP) is disordered. The SWIRM domain occupies 28–126 (LAAAASAARL…FGRYVRSTKI (99 aa)). 137 to 165 (VIVIGAGAAGISAATQLESFGFDVIVLEA) provides a ligand contact to FAD. A disordered region spans residues 718 to 739 (NEAVADIPNAPNAPNAQKPEEI).

The protein belongs to the flavin monoamine oxidase family. Probably part of a large repressor complex. Interacts with CoREST protein spr-1. Interacts with chromobox protein homolog hpl-1. It depends on FAD as a cofactor.

The protein resides in the nucleus. The catalysed reaction is N(6),N(6)-dimethyl-L-lysyl(4)-[histone H3] + 2 A + 2 H2O = L-lysyl(4)-[histone H3] + 2 formaldehyde + 2 AH2. Functionally, histone demethylase that specifically demethylates 'Lys-4' of histone H3, a specific tag for epigenetic transcriptional activation, thereby acting as a corepressor. Acts by oxidizing the substrate by FAD to generate the corresponding imine that is subsequently hydrolyzed. Demethylates both mono- and di-methylated 'Lys-4' of histone H3. May be involved in H3 demethylation in mitotic cells including gut and embryonic cells. Participates in the transcriptional repression of the presenilin protein hop-1. May act via the formation of a multiprotein complex that remodel or modify the chromatin. Together with met-2, set-17 and set-26, required for transgenerational fertility. Plays a role in developmental growth and lifespan regulation in response to ultraviolet-induced damage. This Caenorhabditis elegans protein is Lysine-specific histone demethylase 1.